The primary structure comprises 237 residues: Ribonuclease PH (237 aa).

Phosphate contacts are provided by residues arginine 86 and 124–126; that span reads GTR.

Belongs to the RNase PH family. In terms of assembly, homohexameric ring arranged as a trimer of dimers.

It catalyses the reaction tRNA(n+1) + phosphate = tRNA(n) + a ribonucleoside 5'-diphosphate. Its function is as follows. Phosphorolytic 3'-5' exoribonuclease that plays an important role in tRNA 3'-end maturation. Removes nucleotide residues following the 3'-CCA terminus of tRNAs; can also add nucleotides to the ends of RNA molecules by using nucleoside diphosphates as substrates, but this may not be physiologically important. Probably plays a role in initiation of 16S rRNA degradation (leading to ribosome degradation) during starvation. The protein is Ribonuclease PH of Shewanella frigidimarina (strain NCIMB 400).